Here is a 339-residue protein sequence, read N- to C-terminus: Uroporphyrinogen decarboxylase (339 aa).

Residues 21–25 (RQAGR), Asp71, Tyr147, Ser202, and His315 contribute to the substrate site.

The protein belongs to the uroporphyrinogen decarboxylase family. In terms of assembly, homodimer.

Its subcellular location is the cytoplasm. It carries out the reaction uroporphyrinogen III + 4 H(+) = coproporphyrinogen III + 4 CO2. It participates in porphyrin-containing compound metabolism; protoporphyrin-IX biosynthesis; coproporphyrinogen-III from 5-aminolevulinate: step 4/4. Functionally, catalyzes the decarboxylation of four acetate groups of uroporphyrinogen-III to yield coproporphyrinogen-III. The chain is Uroporphyrinogen decarboxylase from Helicobacter pylori (strain P12).